Here is a 446-residue protein sequence, read N- to C-terminus: Adenylosuccinate synthetase (446 aa).

Residues 21–27 (GDEGKGK) and 49–51 (GHT) each bind GTP. The active-site Proton acceptor is Asp22. Mg(2+) is bound by residues Asp22 and Gly49. IMP is bound by residues 22-25 (DEGK), 47-50 (NAGH), Thr141, Arg155, Gln236, Thr251, and Arg319. His50 acts as the Proton donor in catalysis. Position 315–321 (315–321 (VTTGRSR)) interacts with substrate. GTP-binding positions include Arg321, 347-349 (KLD), and 429-431 (STS).

The protein belongs to the adenylosuccinate synthetase family. As to quaternary structure, homodimer. It depends on Mg(2+) as a cofactor.

It localises to the cytoplasm. The enzyme catalyses IMP + L-aspartate + GTP = N(6)-(1,2-dicarboxyethyl)-AMP + GDP + phosphate + 2 H(+). Its pathway is purine metabolism; AMP biosynthesis via de novo pathway; AMP from IMP: step 1/2. Plays an important role in the de novo pathway of purine nucleotide biosynthesis. Catalyzes the first committed step in the biosynthesis of AMP from IMP. The sequence is that of Adenylosuccinate synthetase from Polaromonas sp. (strain JS666 / ATCC BAA-500).